The chain runs to 190 residues: Potassium-transporting ATPase KdpC subunit (190 aa).

The helical transmembrane segment at 13 to 33 threads the bilayer; it reads VGFLLLTLVCGVIYPGVVTII.

Belongs to the KdpC family. As to quaternary structure, the system is composed of three essential subunits: KdpA, KdpB and KdpC.

It is found in the cell membrane. In terms of biological role, part of the high-affinity ATP-driven potassium transport (or Kdp) system, which catalyzes the hydrolysis of ATP coupled with the electrogenic transport of potassium into the cytoplasm. This subunit acts as a catalytic chaperone that increases the ATP-binding affinity of the ATP-hydrolyzing subunit KdpB by the formation of a transient KdpB/KdpC/ATP ternary complex. The chain is Potassium-transporting ATPase KdpC subunit from Listeria innocua serovar 6a (strain ATCC BAA-680 / CLIP 11262).